The primary structure comprises 501 residues: Phenylalanine--tRNA ligase alpha subunit (501 aa).

L-phenylalanine is bound by residues threonine 340 and phenylalanine 423. Glutamate 425 is a Mg(2+) binding site. Phenylalanine 448 lines the L-phenylalanine pocket.

Belongs to the class-II aminoacyl-tRNA synthetase family. Phe-tRNA synthetase alpha subunit type 2 subfamily. As to quaternary structure, tetramer of two alpha and two beta subunits. Mg(2+) serves as cofactor.

Its subcellular location is the cytoplasm. The catalysed reaction is tRNA(Phe) + L-phenylalanine + ATP = L-phenylalanyl-tRNA(Phe) + AMP + diphosphate + H(+). The polypeptide is Phenylalanine--tRNA ligase alpha subunit (Methanococcus vannielii (strain ATCC 35089 / DSM 1224 / JCM 13029 / OCM 148 / SB)).